A 291-amino-acid chain; its full sequence is Probable 2-(5''-triphosphoribosyl)-3'-dephosphocoenzyme-A synthase (291 aa).

This sequence belongs to the CitG/MdcB family.

It carries out the reaction 3'-dephospho-CoA + ATP = 2'-(5''-triphospho-alpha-D-ribosyl)-3'-dephospho-CoA + adenine. Functionally, involved in the formation of 2-(5''-phosphoribosyl)-3'-dephosphocoenzyme-A, the prosthetic group of the acyl-carrier protein of the malonate decarboxylase. The protein is Probable 2-(5''-triphosphoribosyl)-3'-dephosphocoenzyme-A synthase of Pseudomonas syringae pv. syringae (strain B728a).